A 474-amino-acid polypeptide reads, in one-letter code: Methylenetetrahydrofolate--tRNA-(uracil-5-)-methyltransferase TrmFO (474 aa).

14–19 (GGGLAG) lines the FAD pocket.

It belongs to the MnmG family. TrmFO subfamily. It depends on FAD as a cofactor.

It is found in the cytoplasm. It carries out the reaction uridine(54) in tRNA + (6R)-5,10-methylene-5,6,7,8-tetrahydrofolate + NADH + H(+) = 5-methyluridine(54) in tRNA + (6S)-5,6,7,8-tetrahydrofolate + NAD(+). The catalysed reaction is uridine(54) in tRNA + (6R)-5,10-methylene-5,6,7,8-tetrahydrofolate + NADPH + H(+) = 5-methyluridine(54) in tRNA + (6S)-5,6,7,8-tetrahydrofolate + NADP(+). Its function is as follows. Catalyzes the folate-dependent formation of 5-methyl-uridine at position 54 (M-5-U54) in all tRNAs. The protein is Methylenetetrahydrofolate--tRNA-(uracil-5-)-methyltransferase TrmFO of Caulobacter vibrioides (strain ATCC 19089 / CIP 103742 / CB 15) (Caulobacter crescentus).